The chain runs to 185 residues: Protein LPA2 (185 aa).

The transit peptide at 1–46 (MALQIHSPCSFSTRPYHLFFTTRNPRFAIKCQNSQIESDTTEDPSR) directs the protein to the chloroplast. The interval 35–105 (QIESDTTEDP…VFMSEEGAAK (71 aa)) is disordered. A compositionally biased stretch (low complexity) spans 47 to 75 (SKNSSSSGVGFGSPASSSSPAKKLSAATS). Positions 83–92 (KREVNRRAPV) are enriched in basic and acidic residues. 2 consecutive transmembrane segments (helical) span residues 115 to 135 (AFLL…IILA) and 152 to 172 (VYPV…AYGV).

It is found in the plastid. The protein resides in the chloroplast membrane. The polypeptide is Protein LPA2 (Arabidopsis thaliana (Mouse-ear cress)).